We begin with the raw amino-acid sequence, 1420 residues long: ABC transporter G family member 32 (1420 aa).

The ABC transporter 1 domain occupies 135–408 (LRNIHVIGGK…FSSLGFTCPD (274 aa)). 168-175 (GPPSSGKT) is a binding site for ATP. The 214-residue stretch at 486–699 (ELLKINFAWQ…AQNAASVNEF (214 aa)) folds into the ABC transmembrane type-2 1 domain. The next 7 helical transmembrane spans lie at 504–524 (FIYV…MTVF), 544–564 (LYFS…MLVA), 585–605 (LPSW…WVAV), 623–643 (FLLY…MGSL), 648–668 (IVAN…GGFI), 674–694 (IPSW…QNAA), and 735–755 (IGVA…TLFL). The region spanning 818–1070 (LSFSNINYYV…ELIKYFESIE (253 aa)) is the ABC transporter 2 domain. 863-870 (GVSGAGKT) is an ATP binding site. The 215-residue stretch at 1143–1357 (SQFVACLWKQ…TLYGLLVSQY (215 aa)) folds into the ABC transmembrane type-2 2 domain. Transmembrane regions (helical) follow at residues 1162 to 1182 (YTAV…TICW), 1202 to 1222 (YAAV…VVSI), 1235 to 1255 (MYSA…YVLA), 1277 to 1297 (FLWY…YGMM), 1307 to 1327 (VASI…GFMI), 1334 to 1354 (LWWR…GLLV), and 1392 to 1412 (VSAI…AFAI).

The protein belongs to the ABC transporter superfamily. ABCG family. PDR (TC 3.A.1.205) subfamily. As to expression, ubiquitous in aerial organs. Higher expression levels in young, expanding tissues than in older tissues. Detected in the epidermal layer.

It is found in the cell membrane. Functionally, may be a general defense protein. Required for the formation of the cuticle layer of the cell wall. The polypeptide is ABC transporter G family member 32 (Arabidopsis thaliana (Mouse-ear cress)).